The following is a 184-amino-acid chain: ATP synthase subunit b, chloroplastic (184 aa).

Residues 27 to 49 (LATNPINLSVVLGVLIFFGKGVL) form a helical membrane-spanning segment.

The protein belongs to the ATPase B chain family. In terms of assembly, F-type ATPases have 2 components, F(1) - the catalytic core - and F(0) - the membrane proton channel. F(1) has five subunits: alpha(3), beta(3), gamma(1), delta(1), epsilon(1). F(0) has four main subunits: a(1), b(1), b'(1) and c(10-14). The alpha and beta chains form an alternating ring which encloses part of the gamma chain. F(1) is attached to F(0) by a central stalk formed by the gamma and epsilon chains, while a peripheral stalk is formed by the delta, b and b' chains.

The protein localises to the plastid. It is found in the chloroplast thylakoid membrane. Functionally, f(1)F(0) ATP synthase produces ATP from ADP in the presence of a proton or sodium gradient. F-type ATPases consist of two structural domains, F(1) containing the extramembraneous catalytic core and F(0) containing the membrane proton channel, linked together by a central stalk and a peripheral stalk. During catalysis, ATP synthesis in the catalytic domain of F(1) is coupled via a rotary mechanism of the central stalk subunits to proton translocation. In terms of biological role, component of the F(0) channel, it forms part of the peripheral stalk, linking F(1) to F(0). This Platanus occidentalis (Sycamore) protein is ATP synthase subunit b, chloroplastic.